The chain runs to 698 residues: Probable Xaa-Pro aminopeptidase P (698 aa).

The Mn(2+) site is built by Asp509, Asp520, Glu604, and Glu618.

It belongs to the peptidase M24B family. Requires Mn(2+) as cofactor.

The enzyme catalyses Release of any N-terminal amino acid, including proline, that is linked to proline, even from a dipeptide or tripeptide.. Its function is as follows. Catalyzes the removal of a penultimate prolyl residue from the N-termini of peptides. The polypeptide is Probable Xaa-Pro aminopeptidase P (AMPP) (Arthroderma benhamiae (strain ATCC MYA-4681 / CBS 112371) (Trichophyton mentagrophytes)).